A 137-amino-acid chain; its full sequence is Partner of bursicon (137 aa).

The first 24 residues, 1-24, serve as a signal peptide directing secretion; it reads MNIMITKIFFLVQLFYIVVSKSSA. 5 disulfides stabilise this stretch: cysteine 28-cysteine 86, cysteine 52-cysteine 101, cysteine 61-cysteine 127, cysteine 65-cysteine 129, and cysteine 83-cysteine 132. Positions 28–123 constitute a CTCK domain; it reads CETVASEVHV…NALMEVRLRE (96 aa).

Heterodimer of burs and pburs.

Its subcellular location is the secreted. In terms of biological role, final heterodimeric neurohormone released at the end of the molting cycle, involved in the sclerotization (tanning) of the insect cuticle, melanization and wing spreading. In Bombyx mori (Silk moth), this protein is Partner of bursicon.